The chain runs to 495 residues: UDP-N-acetylmuramoyl-L-alanyl-D-glutamate--2,6-diaminopimelate ligase (495 aa).

UDP-N-acetyl-alpha-D-muramoyl-L-alanyl-D-glutamate-binding positions include Leu27, Ser29, and 44–46 (HQA). 116–122 (GTNGKTT) serves as a coordination point for ATP. Residues Asn157, 158–159 (TT), Ser185, Gln191, and Arg193 contribute to the UDP-N-acetyl-alpha-D-muramoyl-L-alanyl-D-glutamate site. Lys225 is subject to N6-carboxylysine. Meso-2,6-diaminopimelate-binding positions include Arg390, 414 to 417 (DNPR), Gly465, and Glu469. Positions 414-417 (DNPR) match the Meso-diaminopimelate recognition motif motif.

This sequence belongs to the MurCDEF family. MurE subfamily. It depends on Mg(2+) as a cofactor. Carboxylation is probably crucial for Mg(2+) binding and, consequently, for the gamma-phosphate positioning of ATP.

The protein localises to the cytoplasm. It catalyses the reaction UDP-N-acetyl-alpha-D-muramoyl-L-alanyl-D-glutamate + meso-2,6-diaminopimelate + ATP = UDP-N-acetyl-alpha-D-muramoyl-L-alanyl-gamma-D-glutamyl-meso-2,6-diaminopimelate + ADP + phosphate + H(+). Its pathway is cell wall biogenesis; peptidoglycan biosynthesis. In terms of biological role, catalyzes the addition of meso-diaminopimelic acid to the nucleotide precursor UDP-N-acetylmuramoyl-L-alanyl-D-glutamate (UMAG) in the biosynthesis of bacterial cell-wall peptidoglycan. This chain is UDP-N-acetylmuramoyl-L-alanyl-D-glutamate--2,6-diaminopimelate ligase, found in Enterobacter sp. (strain 638).